Here is a 105-residue protein sequence, read N- to C-terminus: Guanidinium exporter (105 aa).

The helical transmembrane segment at 1-21 (MSWIILVIAGLLEVVWAVGLK) threads the bilayer. The Cytoplasmic portion of the chain corresponds to 22–28 (YTHGFSR). The helical transmembrane segment at 29–49 (LTPSVITVTAMIVSMALLAWA) threads the bilayer. Residues 50–57 (MKSLPVGT) are Periplasmic-facing. Residues 58–78 (AYAVWTGIGAVGAAITGIVLL) form a helical membrane-spanning segment. The Cytoplasmic portion of the chain corresponds to 79–81 (GES). Residues 82-102 (ANPMRLASLALIVLGIIGLKL) form a helical membrane-spanning segment. The Periplasmic segment spans residues 103-105 (STH).

Belongs to the drug/metabolite transporter (DMT) superfamily. Small multidrug resistance (SMR) (TC 2.A.7.1) family. Gdx/SugE subfamily.

Its subcellular location is the cell inner membrane. Guanidinium ion exporter. Couples guanidinium export to the proton motive force, exchanging one guanidinium ion for two protons. The chain is Guanidinium exporter from Escherichia coli O157:H7.